A 422-amino-acid chain; its full sequence is Dihydrolipoyllysine-residue succinyltransferase component of 2-oxoglutarate dehydrogenase complex (422 aa).

One can recognise a Lipoyl-binding domain in the interval 1–76; the sequence is MPEVKVPELA…EVGQAIAIIG (76 aa). Lys42 is subject to N6-lipoyllysine. The tract at residues 77–185 is disordered; that stretch reads EGSGNASKEN…SAKEEKKYNQ (109 aa). Polar residues-rich tracts occupy residues 80–94 and 116–130; these read GNAS…TPQQ and NQAN…NATP. The region spanning 127 to 163 is the Peripheral subunit-binding (PSBD) domain; that stretch reads NATPSARRYARENGVNLAEVSPKTNDVVRKEDIDKKQ. Residues 152 to 163 show a composition bias toward basic and acidic residues; the sequence is DVVRKEDIDKKQ. Residues 164–176 show a composition bias toward low complexity; it reads QAPASTQTTQQAS. Catalysis depends on residues His393 and Asp397.

This sequence belongs to the 2-oxoacid dehydrogenase family. In terms of assembly, forms a 24-polypeptide structural core with octahedral symmetry. Part of the 2-oxoglutarate dehydrogenase (OGDH) complex composed of E1 (2-oxoglutarate dehydrogenase), E2 (dihydrolipoamide succinyltransferase) and E3 (dihydrolipoamide dehydrogenase); the complex contains multiple copies of the three enzymatic components (E1, E2 and E3). (R)-lipoate is required as a cofactor.

The enzyme catalyses N(6)-[(R)-dihydrolipoyl]-L-lysyl-[protein] + succinyl-CoA = N(6)-[(R)-S(8)-succinyldihydrolipoyl]-L-lysyl-[protein] + CoA. It participates in amino-acid degradation; L-lysine degradation via saccharopine pathway; glutaryl-CoA from L-lysine: step 6/6. E2 component of the 2-oxoglutarate dehydrogenase (OGDH) complex which catalyzes the second step in the conversion of 2-oxoglutarate to succinyl-CoA and CO(2). The polypeptide is Dihydrolipoyllysine-residue succinyltransferase component of 2-oxoglutarate dehydrogenase complex (odhB) (Staphylococcus aureus (strain USA300)).